A 329-amino-acid polypeptide reads, in one-letter code: Ketol-acid reductoisomerase (NADP(+)) (329 aa).

Residues 2 to 182 enclose the KARI N-terminal Rossmann domain; it reads TQLFYDTDAD…GGTRAGILET (181 aa). Residues 25–28, serine 51, serine 53, and 83–86 contribute to the NADP(+) site; these read YGSQ and DEFQ. Residue histidine 108 is part of the active site. Residue glycine 134 coordinates NADP(+). Residues 183–328 enclose the KARI C-terminal knotted domain; sequence NFKEETETDL…KGLRAMFSWL (146 aa). Positions 191, 195, 227, and 231 each coordinate Mg(2+). Residue serine 252 participates in substrate binding.

The protein belongs to the ketol-acid reductoisomerase family. Requires Mg(2+) as cofactor.

It catalyses the reaction (2R)-2,3-dihydroxy-3-methylbutanoate + NADP(+) = (2S)-2-acetolactate + NADPH + H(+). It carries out the reaction (2R,3R)-2,3-dihydroxy-3-methylpentanoate + NADP(+) = (S)-2-ethyl-2-hydroxy-3-oxobutanoate + NADPH + H(+). It participates in amino-acid biosynthesis; L-isoleucine biosynthesis; L-isoleucine from 2-oxobutanoate: step 2/4. Its pathway is amino-acid biosynthesis; L-valine biosynthesis; L-valine from pyruvate: step 2/4. In terms of biological role, involved in the biosynthesis of branched-chain amino acids (BCAA). Catalyzes an alkyl-migration followed by a ketol-acid reduction of (S)-2-acetolactate (S2AL) to yield (R)-2,3-dihydroxy-isovalerate. In the isomerase reaction, S2AL is rearranged via a Mg-dependent methyl migration to produce 3-hydroxy-3-methyl-2-ketobutyrate (HMKB). In the reductase reaction, this 2-ketoacid undergoes a metal-dependent reduction by NADPH to yield (R)-2,3-dihydroxy-isovalerate. This Prochlorococcus marinus subsp. pastoris (strain CCMP1986 / NIES-2087 / MED4) protein is Ketol-acid reductoisomerase (NADP(+)).